Here is a 240-residue protein sequence, read N- to C-terminus: Methylthioribulose-1-phosphate dehydratase (240 aa).

Positions 1 to 10 are enriched in basic and acidic residues; sequence MAQEIEKTNN. Positions 1-20 are disordered; sequence MAQEIEKTNNDHLVQSSDPE. C100 lines the substrate pocket. Positions 117 and 119 each coordinate Zn(2+). E146 serves as the catalytic Proton donor/acceptor. H202 contributes to the Zn(2+) binding site.

It belongs to the aldolase class II family. MtnB subfamily. The cofactor is Zn(2+).

It is found in the cytoplasm. The catalysed reaction is 5-(methylsulfanyl)-D-ribulose 1-phosphate = 5-methylsulfanyl-2,3-dioxopentyl phosphate + H2O. It functions in the pathway amino-acid biosynthesis; L-methionine biosynthesis via salvage pathway; L-methionine from S-methyl-5-thio-alpha-D-ribose 1-phosphate: step 2/6. Functionally, catalyzes the dehydration of methylthioribulose-1-phosphate (MTRu-1-P) into 2,3-diketo-5-methylthiopentyl-1-phosphate (DK-MTP-1-P). The polypeptide is Methylthioribulose-1-phosphate dehydratase (Aspergillus fumigatus (strain CBS 144.89 / FGSC A1163 / CEA10) (Neosartorya fumigata)).